A 619-amino-acid polypeptide reads, in one-letter code: Isocitrate dehydrogenase kinase/phosphatase (619 aa).

Residues 354 to 360 (APGIRGM) and Lys375 each bind ATP. Asp409 is an active-site residue.

It belongs to the AceK family.

Its subcellular location is the cytoplasm. It catalyses the reaction L-seryl-[isocitrate dehydrogenase] + ATP = O-phospho-L-seryl-[isocitrate dehydrogenase] + ADP + H(+). Its function is as follows. Bifunctional enzyme which can phosphorylate or dephosphorylate isocitrate dehydrogenase (IDH) on a specific serine residue. This is a regulatory mechanism which enables bacteria to bypass the Krebs cycle via the glyoxylate shunt in response to the source of carbon. When bacteria are grown on glucose, IDH is fully active and unphosphorylated, but when grown on acetate or ethanol, the activity of IDH declines drastically concomitant with its phosphorylation. This is Isocitrate dehydrogenase kinase/phosphatase from Bordetella bronchiseptica (strain ATCC BAA-588 / NCTC 13252 / RB50) (Alcaligenes bronchisepticus).